The sequence spans 137 residues: MLQPKRTRFRKQFKGRIHGVSKGGTDLNFGAYGLKAVEPERITARQIEAARRAITRYMKRSGRVWIRIFPDLPVTSKPTEVRMGKGKGGVEYWAARVAPGRIIFEIDGVLEDVAREALRLGAAKLPIKTRFIQRLAE.

Belongs to the universal ribosomal protein uL16 family. Part of the 50S ribosomal subunit.

In terms of biological role, binds 23S rRNA and is also seen to make contacts with the A and possibly P site tRNAs. In Bartonella quintana (strain Toulouse) (Rochalimaea quintana), this protein is Large ribosomal subunit protein uL16.